Consider the following 120-residue polypeptide: U13-lycotoxin-Ls1a (120 aa).

An N-terminal signal peptide occupies residues 1-16 (MKTLFVLISILYAVYC). The propeptide occupies 17–54 (FSSEEDVDSAYLANELEPVEDINSEQYAALEPKEEQER). 4 disulfides stabilise this stretch: Cys-56-Cys-70, Cys-63-Cys-76, Cys-69-Cys-87, and Cys-78-Cys-85. An Agouti domain is found at 56-95 (CADMGQDCKDDCDCCLNIATCNCWFGRYFCSCTFGDYQTC).

This sequence belongs to the neurotoxin 05 (agouti) family. Contains 6 disulfide bonds. As to expression, expressed by the venom gland.

It is found in the secreted. The polypeptide is U13-lycotoxin-Ls1a (Lycosa singoriensis (Wolf spider)).